A 275-amino-acid polypeptide reads, in one-letter code: NH(3)-dependent NAD(+) synthetase (275 aa).

Residue 50 to 57 (GISGGVDS) participates in ATP binding. D56 contributes to the Mg(2+) binding site. R147 serves as a coordination point for deamido-NAD(+). T167 contributes to the ATP binding site. E172 contributes to the Mg(2+) binding site. Deamido-NAD(+) contacts are provided by K180 and D187. ATP-binding residues include K196 and T218. 267–268 (HK) is a binding site for deamido-NAD(+).

It belongs to the NAD synthetase family. Homodimer.

It catalyses the reaction deamido-NAD(+) + NH4(+) + ATP = AMP + diphosphate + NAD(+) + H(+). It participates in cofactor biosynthesis; NAD(+) biosynthesis; NAD(+) from deamido-NAD(+) (ammonia route): step 1/1. Its function is as follows. Catalyzes the ATP-dependent amidation of deamido-NAD to form NAD. Uses ammonia as a nitrogen source. The polypeptide is NH(3)-dependent NAD(+) synthetase (Pseudomonas putida (strain GB-1)).